Here is a 273-residue protein sequence, read N- to C-terminus: DnaJ homolog subfamily C member 27 (273 aa).

Residues M1–K18 form a required for interaction with MAPK1 region. Residues G23–S30, D71–H75, and N134–D137 contribute to the GTP site. The 57-residue stretch at D217–K273 folds into the J domain.

It belongs to the small GTPase superfamily. Rab family. Interacts directly with MAPK1 (wild-type and kinase-deficient forms). Interacts directly (in GTP-bound form) with MAP2K1 (wild-type and kinase-deficient forms).

The protein resides in the nucleus. In terms of biological role, GTPase which can activate the MEK/ERK pathway and induce cell transformation when overexpressed. May act as a nuclear scaffold for MAPK1, probably by association with MAPK1 nuclear export signal leading to enhanced ERK1/ERK2 signaling. In Mus musculus (Mouse), this protein is DnaJ homolog subfamily C member 27 (Dnajc27).